The sequence spans 355 residues: NADH-quinone oxidoreductase subunit H (355 aa).

8 consecutive transmembrane segments (helical) span residues 25-45 (VVRI…LILW), 91-111 (WLYL…WAVI), 126-146 (LLYA…AGWA), 170-190 (MGFA…SEIV), 205-225 (FLSW…ISGI), 253-273 (MAFA…SALA), 290-310 (FIPG…VFIW), and 330-350 (VFLP…MSPL).

The protein belongs to the complex I subunit 1 family. In terms of assembly, NDH-1 is composed of 14 different subunits. Subunits NuoA, H, J, K, L, M, N constitute the membrane sector of the complex.

It is found in the cell inner membrane. The catalysed reaction is a quinone + NADH + 5 H(+)(in) = a quinol + NAD(+) + 4 H(+)(out). Functionally, NDH-1 shuttles electrons from NADH, via FMN and iron-sulfur (Fe-S) centers, to quinones in the respiratory chain. The immediate electron acceptor for the enzyme in this species is believed to be ubiquinone. Couples the redox reaction to proton translocation (for every two electrons transferred, four hydrogen ions are translocated across the cytoplasmic membrane), and thus conserves the redox energy in a proton gradient. This subunit may bind ubiquinone. The polypeptide is NADH-quinone oxidoreductase subunit H (Burkholderia cenocepacia (strain ATCC BAA-245 / DSM 16553 / LMG 16656 / NCTC 13227 / J2315 / CF5610) (Burkholderia cepacia (strain J2315))).